A 437-amino-acid polypeptide reads, in one-letter code: UDP-glucose 6-dehydrogenase (437 aa).

Val11, Asp30, Lys35, Thr86, Thr122, and Glu155 together coordinate NAD(+). Residues 151-155 (EFLRE), Lys209, Asn213, 254-258 (FLHAG), and Gly262 contribute to the substrate site. Cys265 (nucleophile) is an active-site residue. Lys268 is an NAD(+) binding site. Lys326 is a binding site for substrate. Position 333 (Arg333) interacts with NAD(+).

The protein belongs to the UDP-glucose/GDP-mannose dehydrogenase family.

The catalysed reaction is UDP-alpha-D-glucose + 2 NAD(+) + H2O = UDP-alpha-D-glucuronate + 2 NADH + 3 H(+). It participates in nucleotide-sugar biosynthesis; UDP-alpha-D-glucuronate biosynthesis; UDP-alpha-D-glucuronate from UDP-alpha-D-glucose: step 1/1. The protein operates within capsule biogenesis; capsule polysaccharide biosynthesis. The chain is UDP-glucose 6-dehydrogenase from Rhizobium meliloti (strain 1021) (Ensifer meliloti).